Here is a 299-residue protein sequence, read N- to C-terminus: N-acetylneuraminate lyase (299 aa).

Aceneuramate-binding residues include S45 and S46. Residue Y134 is the Proton donor of the active site. The active-site Schiff-base intermediate with substrate is K161. 4 residues coordinate aceneuramate: T163, G185, D187, and E188.

Belongs to the DapA family. NanA subfamily. In terms of assembly, homotetramer.

It localises to the cytoplasm. The enzyme catalyses aceneuramate = aldehydo-N-acetyl-D-mannosamine + pyruvate. It participates in amino-sugar metabolism; N-acetylneuraminate degradation; D-fructose 6-phosphate from N-acetylneuraminate: step 1/5. Catalyzes the reversible aldol cleavage of N-acetylneuraminic acid (sialic acid; Neu5Ac) to form pyruvate and N-acetylmannosamine (ManNAc) via a Schiff base intermediate. This Rhizobium meliloti (strain 1021) (Ensifer meliloti) protein is N-acetylneuraminate lyase.